Reading from the N-terminus, the 145-residue chain is Bacilliredoxin SERP1075 (145 aa).

This sequence belongs to the bacilliredoxin family.

The chain is Bacilliredoxin SERP1075 from Staphylococcus epidermidis (strain ATCC 35984 / DSM 28319 / BCRC 17069 / CCUG 31568 / BM 3577 / RP62A).